A 428-amino-acid chain; its full sequence is MSFRSQTSSTTSMRPVSSYSSRSISLHRSVPLGSSASVVGGAGGHGARISSGGFGLASGYSSGSSFSMSVKGSGLFNNEKETMQILNDRLASYLETVRNLEQANSKLELQIRETLEKRGPTTQDYSAYEKVVEDLKSQIYDMTVNNARLVLQIDNARLATDDFRVKYESELAIRQSVESDIIGLRKVIDDTNINRMNLETDIESLKEELIFIKRSHQTDVEELRKHISECGVQVDVDAPKGQDLSKIMEEIRAQYETIIQKNREELKDWHNSQILIVETEVKENTEALQKSRTEVTELRRQFQTLEIDIESLRTMKASLEANLHDVEMRNNMEMEGFNFIIRQQEADLQQLRTSIQAQVHEYQALLNIKMKLEAEIATYRRLLDGEDFRLQDALAVQTTKVQKKITVTETVVDGKVVSQSSEVQEIKK.

A head region spans residues 2–78; it reads SFRSQTSSTT…SVKGSGLFNN (77 aa). Residues 79 to 114 form a coil 1A region; sequence EKETMQILNDRLASYLETVRNLEQANSKLELQIRET. The IF rod domain maps to 79–390; it reads EKETMQILND…RLLDGEDFRL (312 aa). The tract at residues 115 to 131 is linker 1; it reads LEKRGPTTQDYSAYEKV. Positions 132–223 are coil 1B; that stretch reads VEDLKSQIYD…RSHQTDVEEL (92 aa). The tract at residues 224–247 is linker 12; sequence RKHISECGVQVDVDAPKGQDLSKI. The tract at residues 248 to 385 is coil 2; that stretch reads MEEIRAQYET…IATYRRLLDG (138 aa). The interval 386–428 is tail; sequence EDFRLQDALAVQTTKVQKKITVTETVVDGKVVSQSSEVQEIKK.

Belongs to the intermediate filament family. As to quaternary structure, heterotetramer of two type I and two type II keratins. Keratin-18 associates with keratin-8. Phosphorylated. Post-translationally, proteolytically cleaved by caspases during epithelial cell apoptosis.

Functionally, when phosphorylated, plays a role in filament reorganization. This chain is Keratin, type I cytoskeletal 18-A, found in Polypterus senegalus (Senegal bichir).